Here is a 509-residue protein sequence, read N- to C-terminus: 2,3-bisphosphoglycerate-independent phosphoglycerate mutase (509 aa).

Mn(2+) contacts are provided by Asp-12 and Ser-62. Ser-62 (phosphoserine intermediate) is an active-site residue. Substrate is bound by residues His-123, 153-154 (RD), Arg-185, Arg-191, 260-263 (RPDR), and Lys-333. Residues Asp-400, His-404, Asp-441, His-442, and His-460 each contribute to the Mn(2+) site.

It belongs to the BPG-independent phosphoglycerate mutase family. In terms of assembly, monomer. It depends on Mn(2+) as a cofactor.

It carries out the reaction (2R)-2-phosphoglycerate = (2R)-3-phosphoglycerate. The protein operates within carbohydrate degradation; glycolysis; pyruvate from D-glyceraldehyde 3-phosphate: step 3/5. Functionally, catalyzes the interconversion of 2-phosphoglycerate and 3-phosphoglycerate. This is 2,3-bisphosphoglycerate-independent phosphoglycerate mutase from Clostridium kluyveri (strain ATCC 8527 / DSM 555 / NBRC 12016 / NCIMB 10680 / K1).